The chain runs to 89 residues: Ribonuclease P protein component 1 (89 aa).

The protein belongs to the eukaryotic/archaeal RNase P protein component 1 family. In terms of assembly, consists of a catalytic RNA component and at least 4-5 protein subunits.

It localises to the cytoplasm. It catalyses the reaction Endonucleolytic cleavage of RNA, removing 5'-extranucleotides from tRNA precursor.. Functionally, part of ribonuclease P, a protein complex that generates mature tRNA molecules by cleaving their 5'-ends. This chain is Ribonuclease P protein component 1, found in Thermoplasma volcanium (strain ATCC 51530 / DSM 4299 / JCM 9571 / NBRC 15438 / GSS1).